The chain runs to 247 residues: Protein GrpE (247 aa).

Disordered stretches follow at residues 1–68 (MKKN…KNDD) and 226–247 (PAEK…KNEN). Composition is skewed to basic and acidic residues over residues 7–35 (KHAD…KDEQ), 43–54 (TSKENPQEDKAE), and 228–247 (EKQD…KNEN).

Belongs to the GrpE family. Homodimer.

It is found in the cytoplasm. Its function is as follows. Participates actively in the response to hyperosmotic and heat shock by preventing the aggregation of stress-denatured proteins, in association with DnaK and GrpE. It is the nucleotide exchange factor for DnaK and may function as a thermosensor. Unfolded proteins bind initially to DnaJ; upon interaction with the DnaJ-bound protein, DnaK hydrolyzes its bound ATP, resulting in the formation of a stable complex. GrpE releases ADP from DnaK; ATP binding to DnaK triggers the release of the substrate protein, thus completing the reaction cycle. Several rounds of ATP-dependent interactions between DnaJ, DnaK and GrpE are required for fully efficient folding. The chain is Protein GrpE from Treponema denticola (strain ATCC 35405 / DSM 14222 / CIP 103919 / JCM 8153 / KCTC 15104).